The primary structure comprises 94 residues: Pyrimidine/purine nucleoside phosphorylase (94 aa).

The protein belongs to the nucleoside phosphorylase PpnP family.

It catalyses the reaction a purine D-ribonucleoside + phosphate = a purine nucleobase + alpha-D-ribose 1-phosphate. The enzyme catalyses adenosine + phosphate = alpha-D-ribose 1-phosphate + adenine. It carries out the reaction cytidine + phosphate = cytosine + alpha-D-ribose 1-phosphate. The catalysed reaction is guanosine + phosphate = alpha-D-ribose 1-phosphate + guanine. It catalyses the reaction inosine + phosphate = alpha-D-ribose 1-phosphate + hypoxanthine. The enzyme catalyses thymidine + phosphate = 2-deoxy-alpha-D-ribose 1-phosphate + thymine. It carries out the reaction uridine + phosphate = alpha-D-ribose 1-phosphate + uracil. The catalysed reaction is xanthosine + phosphate = alpha-D-ribose 1-phosphate + xanthine. Catalyzes the phosphorolysis of diverse nucleosides, yielding D-ribose 1-phosphate and the respective free bases. Can use uridine, adenosine, guanosine, cytidine, thymidine, inosine and xanthosine as substrates. Also catalyzes the reverse reactions. The polypeptide is Pyrimidine/purine nucleoside phosphorylase (Citrobacter koseri (strain ATCC BAA-895 / CDC 4225-83 / SGSC4696)).